We begin with the raw amino-acid sequence, 134 residues long: Photosystem II assembly factor lipoprotein Psb27 (134 aa).

The N-terminal stretch at 1-21 (MKRFWAMVCALFLSVSLLLTS) is a signal peptide. A lipid anchor (N-palmitoyl cysteine) is attached at C22. C22 carries the S-diacylglycerol cysteine lipid modification.

Belongs to the Psb27 family. In terms of assembly, part of a photosystem II (PSII) assembly intermediate complex PSII-I; crystallized from a strain deleted of psbJ, it forms monomeric PSII before addition of the oxygen evolving complex. PSII-I includes 3 assembly factors not found in mature PSII (Psb27, Psb28 and Psb34). Binds to the lumenal side of PSII, adjacent to the CP43 (psbC) subunit.

Its subcellular location is the cellular thylakoid membrane. In terms of biological role, plays a role in the repair and/or biogenesis of the calcium-manganese-oxide cluster on the lumenal face of the thylakoid membrane. Its presence in a photosystem II (PSII) preparation prevents binding of other extrinsic subunits PsbO, PsbU and PsbV, and thus assembly of calcium-manganese-oxide cluster. Psb27-containing complexes lack oxygen evolving activity and an oxidizable calcium-manganese-oxide cluster, but have a normal reaction center. The chain is Photosystem II assembly factor lipoprotein Psb27 from Thermosynechococcus vestitus (strain NIES-2133 / IAM M-273 / BP-1).